Reading from the N-terminus, the 109-residue chain is Phosphocarrier protein HPr (109 aa).

One can recognise an HPr domain in the interval 22–109 (ELSAVFTIRN…EVFNSGFGEL (88 aa)). The Pros-phosphohistidine intermediate role is filled by His36.

Belongs to the HPr family.

It localises to the cytoplasm. In terms of biological role, general (non sugar-specific) component of the phosphoenolpyruvate-dependent sugar phosphotransferase system (sugar PTS). This major carbohydrate active-transport system catalyzes the phosphorylation of incoming sugar substrates concomitantly with their translocation across the cell membrane. The phosphoryl group from phosphoenolpyruvate (PEP) is transferred to the phosphoryl carrier protein HPr by enzyme I. Phospho-HPr then transfers it to the PTS EIIA domain. The chain is Phosphocarrier protein HPr (ptsH) from Chlamydia trachomatis serovar D (strain ATCC VR-885 / DSM 19411 / UW-3/Cx).